The primary structure comprises 370 residues: Cysteine-type anaerobic sulfatase-maturating enzyme (370 aa).

Residues 1 to 227 (MPPLSLLIKP…LKNLFDLWYE (227 aa)) enclose the Radical SAM core domain. The [4Fe-4S] cluster site is built by cysteine 15 and cysteine 19. Tyrosine 21 contributes to the S-adenosyl-L-methionine binding site. A [4Fe-4S] cluster-binding site is contributed by cysteine 22. 4 residues coordinate S-adenosyl-L-methionine: glycine 66, serine 122, arginine 134, and leucine 195. Cysteine 255, cysteine 261, and cysteine 276 together coordinate [4Fe-4S] cluster. Aspartate 277 functions as the Proton acceptor in the catalytic mechanism. [4Fe-4S] cluster contacts are provided by cysteine 317, cysteine 320, cysteine 326, cysteine 330, and cysteine 348.

It belongs to the radical SAM superfamily. Anaerobic sulfatase-maturating enzyme family. Requires [4Fe-4S] cluster as cofactor.

The catalysed reaction is L-cysteinyl-[sulfatase] + S-adenosyl-L-methionine + H2O = 3-oxo-L-alanyl-[sulfatase] + hydrogen sulfide + 5'-deoxyadenosine + L-methionine + 2 H(+). It participates in protein modification; sulfatase oxidation. Involved in 'Cys-type' sulfatase maturation under anaerobic conditions. Catalyzes the post-translational modification of cysteine into 3-oxoalanine (also known as C(alpha)-formylglycine (FGly)), by a free radical chemical mechanism initiated via the reductive cleavage of S-adenosyl-L-methionine (SAM). This is Cysteine-type anaerobic sulfatase-maturating enzyme from Clostridium perfringens (strain 13 / Type A).